The primary structure comprises 192 residues: Small ribosomal subunit protein eS7 (192 aa).

The protein belongs to the eukaryotic ribosomal protein eS7 family.

In Culex quinquefasciatus (Southern house mosquito), this protein is Small ribosomal subunit protein eS7 (RpS7).